A 1036-amino-acid chain; its full sequence is Isoleucine--tRNA ligase (1036 aa).

The short motif at 46-56 is the 'HIGH' region element; it reads PFATGLPHYGH. A 'KMSKS' region motif is present at residues 589–593; the sequence is KMSKR. K592 contributes to the ATP binding site.

The protein belongs to the class-I aminoacyl-tRNA synthetase family. IleS type 2 subfamily. Monomer. Zn(2+) serves as cofactor.

The protein resides in the cytoplasm. The enzyme catalyses tRNA(Ile) + L-isoleucine + ATP = L-isoleucyl-tRNA(Ile) + AMP + diphosphate. In terms of biological role, catalyzes the attachment of isoleucine to tRNA(Ile). As IleRS can inadvertently accommodate and process structurally similar amino acids such as valine, to avoid such errors it has two additional distinct tRNA(Ile)-dependent editing activities. One activity is designated as 'pretransfer' editing and involves the hydrolysis of activated Val-AMP. The other activity is designated 'posttransfer' editing and involves deacylation of mischarged Val-tRNA(Ile). This is Isoleucine--tRNA ligase from Chlamydia trachomatis serovar A (strain ATCC VR-571B / DSM 19440 / HAR-13).